The sequence spans 70 residues: MGAIAAGIAAGLAAVGAGVGNGLVIGHTLDGMARQPEMSGQLRGTMFLGVGLIEALPILSIVIAFLVMNK.

The next 2 helical transmembrane spans lie at 4-24 (IAAG…NGLV) and 47-67 (FLGV…AFLV).

This sequence belongs to the ATPase C chain family. As to quaternary structure, F-type ATPases have 2 components, F(1) - the catalytic core - and F(0) - the membrane proton channel. F(1) has five subunits: alpha(3), beta(3), gamma(1), delta(1), epsilon(1). F(0) has three main subunits: a(1), b(2) and c(10-14). The alpha and beta chains form an alternating ring which encloses part of the gamma chain. F(1) is attached to F(0) by a central stalk formed by the gamma and epsilon chains, while a peripheral stalk is formed by the delta and b chains.

It is found in the cell membrane. In terms of biological role, f(1)F(0) ATP synthase produces ATP from ADP in the presence of a proton or sodium gradient. F-type ATPases consist of two structural domains, F(1) containing the extramembraneous catalytic core and F(0) containing the membrane proton channel, linked together by a central stalk and a peripheral stalk. During catalysis, ATP synthesis in the catalytic domain of F(1) is coupled via a rotary mechanism of the central stalk subunits to proton translocation. Its function is as follows. Key component of the F(0) channel; it plays a direct role in translocation across the membrane. A homomeric c-ring of between 10-14 subunits forms the central stalk rotor element with the F(1) delta and epsilon subunits. This chain is ATP synthase subunit c, found in Limosilactobacillus fermentum (strain NBRC 3956 / LMG 18251) (Lactobacillus fermentum).